Reading from the N-terminus, the 360-residue chain is Peptide chain release factor 1 (360 aa).

Gln235 carries the N5-methylglutamine modification. The span at 291–308 (ASERRNLLGTGDRSDRNR) shows a compositional bias: basic and acidic residues. Positions 291–312 (ASERRNLLGTGDRSDRNRTYNF) are disordered.

The protein belongs to the prokaryotic/mitochondrial release factor family. In terms of processing, methylated by PrmC. Methylation increases the termination efficiency of RF1.

Its subcellular location is the cytoplasm. Its function is as follows. Peptide chain release factor 1 directs the termination of translation in response to the peptide chain termination codons UAG and UAA. The polypeptide is Peptide chain release factor 1 (Yersinia pseudotuberculosis serotype O:1b (strain IP 31758)).